The primary structure comprises 424 residues: UDP-N-acetylglucosamine 1-carboxyvinyltransferase (424 aa).

22–23 (KN) is a phosphoenolpyruvate binding site. Arginine 98 contacts UDP-N-acetyl-alpha-D-glucosamine. The active-site Proton donor is cysteine 122. Cysteine 122 carries the 2-(S-cysteinyl)pyruvic acid O-phosphothioketal modification. UDP-N-acetyl-alpha-D-glucosamine-binding positions include 127 to 131 (RPVDQ), aspartate 312, and isoleucine 334.

This sequence belongs to the EPSP synthase family. MurA subfamily.

It is found in the cytoplasm. The catalysed reaction is phosphoenolpyruvate + UDP-N-acetyl-alpha-D-glucosamine = UDP-N-acetyl-3-O-(1-carboxyvinyl)-alpha-D-glucosamine + phosphate. The protein operates within cell wall biogenesis; peptidoglycan biosynthesis. Functionally, cell wall formation. Adds enolpyruvyl to UDP-N-acetylglucosamine. The sequence is that of UDP-N-acetylglucosamine 1-carboxyvinyltransferase from Xanthomonas euvesicatoria pv. vesicatoria (strain 85-10) (Xanthomonas campestris pv. vesicatoria).